Here is a 580-residue protein sequence, read N- to C-terminus: Proline--tRNA ligase (580 aa).

Belongs to the class-II aminoacyl-tRNA synthetase family. ProS type 1 subfamily. In terms of assembly, homodimer.

It localises to the cytoplasm. It carries out the reaction tRNA(Pro) + L-proline + ATP = L-prolyl-tRNA(Pro) + AMP + diphosphate. In terms of biological role, catalyzes the attachment of proline to tRNA(Pro) in a two-step reaction: proline is first activated by ATP to form Pro-AMP and then transferred to the acceptor end of tRNA(Pro). As ProRS can inadvertently accommodate and process non-cognate amino acids such as alanine and cysteine, to avoid such errors it has two additional distinct editing activities against alanine. One activity is designated as 'pretransfer' editing and involves the tRNA(Pro)-independent hydrolysis of activated Ala-AMP. The other activity is designated 'posttransfer' editing and involves deacylation of mischarged Ala-tRNA(Pro). The misacylated Cys-tRNA(Pro) is not edited by ProRS. The protein is Proline--tRNA ligase of Albidiferax ferrireducens (strain ATCC BAA-621 / DSM 15236 / T118) (Rhodoferax ferrireducens).